We begin with the raw amino-acid sequence, 209 residues long: Small ribosomal subunit protein uS3 (209 aa).

The KH type-2 domain occupies 38-107; that stretch reads IRKIIKNKYY…RVVINIEEIK (70 aa).

Belongs to the universal ribosomal protein uS3 family. In terms of assembly, part of the 30S ribosomal subunit. Forms a tight complex with proteins S10 and S14.

Binds the lower part of the 30S subunit head. Binds mRNA in the 70S ribosome, positioning it for translation. This Thermotoga maritima (strain ATCC 43589 / DSM 3109 / JCM 10099 / NBRC 100826 / MSB8) protein is Small ribosomal subunit protein uS3.